The following is a 334-amino-acid chain: Large ribosomal subunit protein uL3 (334 aa).

Positions 1 to 10 (MGMKKNRPRR) are enriched in basic residues. Residues 1–21 (MGMKKNRPRRGSLAFSPRKRA) form a disordered region.

The protein belongs to the universal ribosomal protein uL3 family. In terms of assembly, part of the 50S ribosomal subunit. Forms a cluster with proteins L14 and L24e.

Functionally, one of the primary rRNA binding proteins, it binds directly near the 3'-end of the 23S rRNA, where it nucleates assembly of the 50S subunit. This Methanococcus vannielii (strain ATCC 35089 / DSM 1224 / JCM 13029 / OCM 148 / SB) protein is Large ribosomal subunit protein uL3.